Here is a 579-residue protein sequence, read N- to C-terminus: Sulfite reductase [NADPH] hemoprotein beta-component (579 aa).

The [4Fe-4S] cluster site is built by cysteine 434, cysteine 440, cysteine 479, and cysteine 483. Cysteine 483 serves as a coordination point for siroheme.

The protein belongs to the nitrite and sulfite reductase 4Fe-4S domain family. In terms of assembly, alpha(8)-beta(8). The alpha component is a flavoprotein, the beta component is a hemoprotein. The cofactor is siroheme. It depends on [4Fe-4S] cluster as a cofactor.

The catalysed reaction is hydrogen sulfide + 3 NADP(+) + 3 H2O = sulfite + 3 NADPH + 4 H(+). Its pathway is sulfur metabolism; hydrogen sulfide biosynthesis; hydrogen sulfide from sulfite (NADPH route): step 1/1. Its function is as follows. Component of the sulfite reductase complex that catalyzes the 6-electron reduction of sulfite to sulfide. This is one of several activities required for the biosynthesis of L-cysteine from sulfate. This chain is Sulfite reductase [NADPH] hemoprotein beta-component, found in Salmonella choleraesuis (strain SC-B67).